The following is a 155-amino-acid chain: Large ribosomal subunit protein uL16 (155 aa).

It belongs to the universal ribosomal protein uL16 family. In terms of assembly, part of the 50S ribosomal subunit.

Its function is as follows. Binds 23S rRNA and is also seen to make contacts with the A and possibly P site tRNAs. This is Large ribosomal subunit protein uL16 from Synechococcus sp. (strain CC9311).